An 832-amino-acid chain; its full sequence is Translation initiation factor IF-2 (832 aa).

Basic and acidic residues predominate over residues 1–10 (MLMSDVEKFG). Disordered regions lie at residues 1 to 87 (MLMS…SRSA), 120 to 148 (RDEE…PAAA), and 163 to 201 (IAPG…GGGG). Over residues 11–20 (GDCGSSGGSG) the composition is skewed to gly residues. Polar residues-rich tracts occupy residues 29–42 (RAST…STGG) and 71–87 (SPYT…SRSA). The tr-type G domain occupies 331–500 (PRPPVVTVMG…LLLAEMLELR (170 aa)). The tract at residues 340–347 (GHVDHGKT) is G1. 340 to 347 (GHVDHGKT) contacts GTP. A G2 region spans residues 365–369 (GITQH). The interval 386–389 (DTPG) is G3. Residues 386–390 (DTPGH) and 440–443 (NKID) contribute to the GTP site. Residues 440 to 443 (NKID) are G4. A G5 region spans residues 476–478 (SAK).

The protein belongs to the TRAFAC class translation factor GTPase superfamily. Classic translation factor GTPase family. IF-2 subfamily.

Its subcellular location is the cytoplasm. Functionally, one of the essential components for the initiation of protein synthesis. Protects formylmethionyl-tRNA from spontaneous hydrolysis and promotes its binding to the 30S ribosomal subunits. Also involved in the hydrolysis of GTP during the formation of the 70S ribosomal complex. The sequence is that of Translation initiation factor IF-2 from Anaplasma marginale (strain St. Maries).